Reading from the N-terminus, the 547-residue chain is Chaperonin GroEL (547 aa).

ATP is bound by residues 30-33 (TLGP), K51, 87-91 (DGTTT), G415, 479-481 (NAA), and D495. Residues 525 to 547 (PKEDKPDLGGGNPGGAGGMGGMM) form a disordered region. Residues 532–547 (LGGGNPGGAGGMGGMM) are compositionally biased toward gly residues.

The protein belongs to the chaperonin (HSP60) family. In terms of assembly, forms a cylinder of 14 subunits composed of two heptameric rings stacked back-to-back. Interacts with the co-chaperonin GroES.

It is found in the cytoplasm. The catalysed reaction is ATP + H2O + a folded polypeptide = ADP + phosphate + an unfolded polypeptide.. Functionally, together with its co-chaperonin GroES, plays an essential role in assisting protein folding. The GroEL-GroES system forms a nano-cage that allows encapsulation of the non-native substrate proteins and provides a physical environment optimized to promote and accelerate protein folding. In Blochmanniella floridana, this protein is Chaperonin GroEL.